A 415-amino-acid chain; its full sequence is Phosphoglycerate kinase (415 aa).

Residues Val22, Asp23, Phe24, Asn25, Gln37, Arg38, Ser61, His62, Gly64, Leu120, Arg121, His168, and Arg169 each coordinate (2R)-3-phosphoglycerate. Gly212 is an ADP binding site. Residue Gly212 participates in CDP binding. Ala213 and Lys214 together coordinate AMP. Ala213 lines the ATP pocket. Mg(2+) is bound at residue Ala213. Position 217 (Asp217) interacts with CDP. Residue Asp217 participates in Mg(2+) binding. An AMP-binding site is contributed by Lys218. Lys218 is an ATP binding site. Residue Gly236 coordinates ADP. Gly236 provides a ligand contact to CDP. AMP is bound by residues Gly237 and Gly311. Gly237 and Gly311 together coordinate ATP. Gly336 and Phe341 together coordinate CDP. Phe341 serves as a coordination point for ADP. Glu342 lines the AMP pocket. 3 residues coordinate ATP: Glu342, Asp373, and Thr374. Asp373 provides a ligand contact to Mg(2+).

Belongs to the phosphoglycerate kinase family. Monomer. Requires Mg(2+) as cofactor.

The protein localises to the cytoplasm. It catalyses the reaction (2R)-3-phosphoglycerate + ATP = (2R)-3-phospho-glyceroyl phosphate + ADP. It participates in carbohydrate degradation; glycolysis; pyruvate from D-glyceraldehyde 3-phosphate: step 2/5. In Opisthorchis sinensis (Clonorchis sinensis), this protein is Phosphoglycerate kinase (PGK).